A 261-amino-acid polypeptide reads, in one-letter code: uncharacterized protein (261 aa).

Positions 135 to 261 (LVLKRIDEDI…VTEYTIYYSG (127 aa)) constitute an N-acetyltransferase domain.

The protein belongs to the acetyltransferase family.

This is an uncharacterized protein from Bacillus subtilis (strain 168).